Reading from the N-terminus, the 303-residue chain is Putative F-box protein At5g62060 (303 aa).

Residues 27–74 (KSRYIDIPLDITVEILKKLPAKSLVRFQCVSKQWSTIIGSRRDFIDSI) enclose the F-box domain.

The polypeptide is Putative F-box protein At5g62060 (Arabidopsis thaliana (Mouse-ear cress)).